The following is a 526-amino-acid chain: MRFRRYFSSTFKRLIDCNSCGVKLQNKQPGALGYYTKKDDNLVKKITLEDVKYLIFGQDIQRIKEMTVDTENYDIKLEKPLICKRCSEALHNNKYNATEFKDIPFEEVEKQIPLHSNVVHTAPILEFPFHINSQLLKNRTFNTTMVFTKADRVFKNKKQVQKQIPIFLDAFFETYLNSKATRNIVTSTLNRWNLDTLFSFLHGTNYFVGEPNSGKSTLINALLRRLFGVKIRGNDVKNFELDKQAEEELAVSKKFFLEKQLAGVSHIPNLTRTLQAYKIKQKIIYDLPGYSNYNSYRIDEFIDPKWLQRFRKTSIFSEKRVKKKRYDSIVGNENGKCLTLGGIFYLVPPPTTINQIVCYIPGELRQFHNTDRGIEVLGKSGSKEHPLNKYCGIKPGIGKEKYIRHIIPPFQGPIEVVLKDIGYFSLTPTGKYEYKGLYELWVLDGIDVCIRKPLERVAEDSYDKSQEGKYYIKEPVVSHTYVVAHNDPNPLQTVKESYEKVKERTDEILNKYNLEKFGNNMWHFKW.

The N-terminal 14 residues, Met-1–Leu-14, are a transit peptide targeting the mitochondrion. In terms of domain architecture, CP-type G spans Phe-105–Tyr-293.

Belongs to the TRAFAC class YlqF/YawG GTPase family. GEP3 subfamily.

It is found in the mitochondrion. May be involved in the mitochondrial lipid metabolism. The sequence is that of Genetic interactor of prohibitins 3, mitochondrial (GEP3) from Candida glabrata (strain ATCC 2001 / BCRC 20586 / JCM 3761 / NBRC 0622 / NRRL Y-65 / CBS 138) (Yeast).